We begin with the raw amino-acid sequence, 246 residues long: mRNA-decapping protein g5R (246 aa).

The Nudix hydrolase domain occupies 93 to 239 (QKFRKNWLLP…IIGPAFNFIK (147 aa)). The short motif at 128–149 (GKPKEDESDLTCAIREFEEETG) is the Nudix box element. Glu134 is a binding site for Mg(2+). Catalysis depends on Glu143, which acts as the Nucleophile. Mg(2+) is bound by residues Glu147 and Asp169.

Belongs to the Nudix hydrolase family. DIPP subfamily. Interacts with host RPL23A. Requires Mg(2+) as cofactor. The cofactor is Mn(2+).

Its subcellular location is the host rough endoplasmic reticulum. The enzyme catalyses diphospho-myo-inositol polyphosphate + H2O = myo-inositol polyphosphate + phosphate.. Functionally, decapping enzyme required for the removal of the 5'-end m7GpppN cap tethered to viral and host mRNAs to allow their decay in cells. May therefore accelerate viral and cellular mRNA turnover to eliminate competing host mRNAs and allow stage-specific synthesis of viral proteins. Acceleration of the turnover of cellular transcripts may even promote the shutoff of host protein synthesis. In addition to the mRNA cap, g5R also efficiently hydrolyzes diphosphoinositol polyphosphates. Down-regulation of the level of PP-InsP5 (diphosphoinositol pentakisphosphate) may play a role in viral manipulation of the cellular secretory pathway, a step necessary for the formation of virions. Binds viral and cellular poly(A) mRNAs, thereby decreasing both types of mRNAs. The protein is mRNA-decapping protein g5R of African swine fever virus (isolate Warthog/Namibia/Wart80/1980) (ASFV).